The following is a 637-amino-acid chain: Palmitoyltransferase Hip14 (637 aa).

Over 1–295 (MYQSACQAAT…SKLRHDKRLR (295 aa)) the chain is Cytoplasmic. ANK repeat units follow at residues 77-106 (ETVT…TVDA), 111-140 (LNAT…DPRI), 144-173 (EGCS…DPDL), 177-207 (GGMT…NPAM), and 212-242 (HGNT…SLDV). The chain crosses the membrane as a helical span at residues 296–315 (WWSMVACPFTAFYLAGIVFT). Over 316 to 318 (VNT) the chain is Lumenal. Residues 319-341 (LYIIKFFLLGCLYSIFHTIGKAL) form a helical membrane-spanning segment. At 342–345 (FDEH) the chain is on the cytoplasmic side. A helical transmembrane segment spans residues 346–366 (LMALLPLSVYLATKAWFYVTW). The Lumenal segment spans residues 367-373 (LMYIDDA). A helical membrane pass occupies residues 374-394 (VSFTATVCFLISSLLLWVCFL). Topologically, residues 395–472 (KSWKGDPGII…VGNCIGLKNH (78 aa)) are cytoplasmic. One can recognise a DHHC domain in the interval 430 to 480 (SFCSGCLVRRPIRSKHCSVCDRCVARFDHHCPWVGNCIGLKNHSYFMGFLW). The S-palmitoyl cysteine intermediate role is filled by Cys-460. The helical transmembrane segment at 473–493 (SYFMGFLWMLLIMCAWMLYGG) threads the bilayer. The Lumenal portion of the chain corresponds to 494–520 (SKYYVNQCNVRFDDFLGAMRAIGNCDA). Residues 521 to 541 (WVGWVMGNALLHMSWVILLTI) traverse the membrane as a helical segment. Topologically, residues 542-637 (CQTYQVICLG…DGMAGDHQYV (96 aa)) are cytoplasmic.

Belongs to the DHHC palmitoyltransferase family. AKR/ZDHHC17 subfamily. As to quaternary structure, interacts with dorsal-ventral patterning protein Sog. In stage 13-15 embryos, expressed in the central nervous system. At the third instar larval stage, expressed in the ventral nerve cord and is enriched in the neuropil.

The protein resides in the golgi apparatus membrane. It localises to the presynaptic cell membrane. It catalyses the reaction L-cysteinyl-[protein] + hexadecanoyl-CoA = S-hexadecanoyl-L-cysteinyl-[protein] + CoA. Its function is as follows. Probable palmitoyltransferase which is required for photoreceptor synaptic transmission and for the correct expression and localization of palmitoylated protein Csp and synaptosomal-associated protein Snap25. Probably palmitoylates Csp. Probably also palmitoylates the dorsal-ventral patterning protein Sog and promotes its secretion and activity and the stabilization of the membrane-bound form. Required for synaptic vesicle exocytosis. The polypeptide is Palmitoyltransferase Hip14 (Drosophila melanogaster (Fruit fly)).